The following is a 291-amino-acid chain: Beta-lactamase Toho-1 (291 aa).

The first 29 residues, 1 to 29, serve as a signal peptide directing secretion; it reads MMTQSIRRSMLTVMATLPLLFSSATLHAQ. Ser-73 acts as the Acyl-ester intermediate in catalysis. 237–239 provides a ligand contact to substrate; that stretch reads KTG.

It belongs to the class-A beta-lactamase family. In terms of assembly, monomer.

The catalysed reaction is a beta-lactam + H2O = a substituted beta-amino acid. In terms of biological role, has strong cefotaxime-hydrolyzing activity. The polypeptide is Beta-lactamase Toho-1 (bla) (Escherichia coli).